A 221-amino-acid chain; its full sequence is NEDD4 family-interacting protein 1 (221 aa).

An N-acetylalanine modification is found at Ala-2. Positions 2–41 (ALALAALAAVEPACGSRYQQLQNEEESGEPEQAAGDAPPP) are interaction with UBE2L3. Residues 2-116 (ALALAALAAV…ADQLRIGNDG (115 aa)) lie on the Cytoplasmic side of the membrane. The tract at residues 18 to 45 (RYQQLQNEEESGEPEQAAGDAPPPYSSI) is disordered. Short sequence motifs (PPxY motif) lie at residues 39 to 42 (PPPY), 64 to 67 (PPSY), and 74 to 76 (PSY). The interval 42-76 (YSSISAESAAYFDYKDESGFPKPPSYNVATTLPSY) is interaction with ITCH. Residues 117–137 (IFMLTFFMAFLFNWIGFFLSF) traverse the membrane as a helical segment. Residues 138 to 143 (CLTTSA) are Extracellular-facing. The helical transmembrane segment at 144-164 (AGRYGAISGFGLSLIKWILIV) threads the bilayer. The Cytoplasmic portion of the chain corresponds to 165-172 (RFSTYFPG). A helical membrane pass occupies residues 173 to 193 (YFDGQYWLWWVFLVLGFLLFL). At 194–221 (RGFINYAKVRKMPETFSNLPRTRVLFIY) the chain is on the extracellular side.

In terms of assembly, forms heterodimers with NDFIP2. Interacts with several E3 ubiquitin-protein ligases, including ITCH, NEDD4, NEDD4L and WWP2. The interaction with NEDD4, NEDD4L and ITCH leads to relocalization of these proteins to exosomes and eventually to exosomal secretion. Interacts with U2SURP. Interacts with SLC11A2/DMT1. Interacts with PTEN. May interact with phosphorylated EGFR. Interacts with BRAT1. Interacts with KCNH2. Interacts with MAVS. Part of a complex containing ITCH, NDFIP1 and MAP3K7. Interacts (via N-terminus) with UBE2L3; the interaction mediates recruitment of UBE2L3 to ITCH. Post-translationally, ubiquitinated by NEDD4 and ITCH; mono-, di- and polyubiquitinated forms are detected. Ubiquitination regulates its degradation. Undergoes transient tyrosine phosphorylation following EGF stimulation, most probably by catalyzed by SRC. Phosphorylation SRC is enhanced in the presence of NDFIP2 which may act as a scaffold to recruit SRC to NDFIP1. In terms of tissue distribution, widely expressed. Higher levels are detected in cerebellum, pituitary, thalamus, kidney, liver, testis, salivary glands and placenta. Also expressed in fetal brain, kidney and lung.

It localises to the endosome membrane. Its subcellular location is the golgi apparatus membrane. The protein localises to the synapse. The protein resides in the synaptosome. It is found in the cell projection. It localises to the dendrite. Its subcellular location is the secreted. Activates HECT domain-containing E3 ubiquitin-protein ligases, including NEDD4 and ITCH, and consequently modulates the stability of their targets. As a result, controls many cellular processes. Prevents chronic T-helper cell-mediated inflammation by activating ITCH and thus controlling JUNB degradation. Promotes pancreatic beta cell death through degradation of JUNB and inhibition of the unfolded protein response, leading to reduction of insulin secretion. Restricts the production of pro-inflammatory cytokines in effector Th17 T-cells by promoting ITCH-mediated ubiquitination and degradation of RORC. Together with NDFIP2, limits the cytokine signaling and expansion of effector Th2 T-cells by promoting degradation of JAK1, probably by ITCH- and NEDD4L-mediated ubiquitination. Regulates peripheral T-cell tolerance to self and foreign antigens, forcing the exit of naive CD4+ T-cells from the cell cycle before they become effector T-cells. Negatively regulates RLR-mediated antiviral response by promoting SMURF1-mediated ubiquitination and subsequent degradation of MAVS. Negatively regulates KCNH2 potassium channel activity by decreasing its cell-surface expression and interfering with channel maturation through recruitment of NEDD4L to the Golgi apparatus where it mediates KCNH2 degradation. In cortical neurons, mediates the ubiquitination of the divalent metal transporter SLC11A2/DMT1 by NEDD4L, leading to its down-regulation and protection of the cells from cobalt and iron toxicity. Important for normal development of dendrites and dendritic spines in cortex. Enhances the ubiquitination of BRAT1 mediated by: NEDD4, NEDD4L and ITCH and is required for the nuclear localization of ubiquitinated BRAT1. Enhances the ITCH-mediated ubiquitination of MAP3K7 by recruiting E2 ubiquitin-conjugating enzyme UBE2L3 to ITCH. Modulates EGFR signaling through multiple pathways. In particular, may regulate the ratio of AKT1-to-MAPK8 signaling in response to EGF, acting on AKT1 probably through PTEN destabilization and on MAPK8 through ITCH-dependent MAP2K4 inactivation. As a result, may control cell growth rate. Inhibits cell proliferation by promoting PTEN nuclear localization and changing its signaling specificity. This chain is NEDD4 family-interacting protein 1 (NDFIP1), found in Homo sapiens (Human).